The following is a 519-amino-acid chain: Protein nucleotidyltransferase YdiU (519 aa).

The ATP site is built by G101, G103, R104, K124, D136, G137, R194, and R201. The Proton acceptor role is filled by D271. Residues N272 and D281 each coordinate Mg(2+). D281 serves as a coordination point for ATP.

It belongs to the SELO family. Requires Mg(2+) as cofactor. It depends on Mn(2+) as a cofactor.

The enzyme catalyses L-seryl-[protein] + ATP = 3-O-(5'-adenylyl)-L-seryl-[protein] + diphosphate. It catalyses the reaction L-threonyl-[protein] + ATP = 3-O-(5'-adenylyl)-L-threonyl-[protein] + diphosphate. It carries out the reaction L-tyrosyl-[protein] + ATP = O-(5'-adenylyl)-L-tyrosyl-[protein] + diphosphate. The catalysed reaction is L-histidyl-[protein] + UTP = N(tele)-(5'-uridylyl)-L-histidyl-[protein] + diphosphate. The enzyme catalyses L-seryl-[protein] + UTP = O-(5'-uridylyl)-L-seryl-[protein] + diphosphate. It catalyses the reaction L-tyrosyl-[protein] + UTP = O-(5'-uridylyl)-L-tyrosyl-[protein] + diphosphate. Its function is as follows. Nucleotidyltransferase involved in the post-translational modification of proteins. It can catalyze the addition of adenosine monophosphate (AMP) or uridine monophosphate (UMP) to a protein, resulting in modifications known as AMPylation and UMPylation. This Azoarcus sp. (strain BH72) protein is Protein nucleotidyltransferase YdiU.